The sequence spans 424 residues: Na(+)/H(+) antiporter NhaP (424 aa).

12 helical membrane-spanning segments follow: residues 3 to 23, 25 to 45, 66 to 86, 96 to 116, 130 to 152, 170 to 190, 200 to 220, 246 to 266, 296 to 316, 320 to 340, 358 to 378, and 384 to 404; these read DLVA…YRFI, LPPT…VQGL, FSEV…ALHV, WPIG…IGGL, FIYC…LGIL, LFND…LQLG, ILFV…GYGV, ALAA…GLII, ALLF…WLHV, FALG…AILV, ILVW…SLPL, and LILS…GLSI.

Belongs to the monovalent cation:proton antiporter 1 (CPA1) transporter (TC 2.A.36) family.

It is found in the cell inner membrane. Its activity is regulated as follows. Inhibited by amiloride. In terms of biological role, na(+)/H(+) antiporter that extrudes sodium in exchange for external protons. Also has weak Li(+)/H(+) antiport activity. The sequence is that of Na(+)/H(+) antiporter NhaP (nhaP) from Pseudomonas aeruginosa (strain ATCC 15692 / DSM 22644 / CIP 104116 / JCM 14847 / LMG 12228 / 1C / PRS 101 / PAO1).